A 545-amino-acid polypeptide reads, in one-letter code: Thermosome subunit alpha (545 aa).

The protein belongs to the TCP-1 chaperonin family. In terms of assembly, forms a Heterooligomeric complex of two stacked eight-membered rings.

Its function is as follows. Molecular chaperone; binds unfolded polypeptides in vitro, and has a weak ATPase activity. The chain is Thermosome subunit alpha (thsA) from Archaeoglobus fulgidus (strain ATCC 49558 / DSM 4304 / JCM 9628 / NBRC 100126 / VC-16).